The chain runs to 428 residues: Adenylosuccinate synthetase (428 aa).

Residues 12 to 18 and 40 to 42 each bind GTP; these read GDEGKGK and GHT. D13 acts as the Proton acceptor in catalysis. Positions 13 and 40 each coordinate Mg(2+). IMP is bound by residues 13–16, 38–41, T128, R142, Q223, T238, and R302; these read DEGK and NAGH. Catalysis depends on H41, which acts as the Proton donor. 298–304 is a substrate binding site; that stretch reads TTTGRPR. GTP-binding positions include R304, 330–332, and 412–414; these read SID and SVG.

The protein belongs to the adenylosuccinate synthetase family. In terms of assembly, homodimer. The cofactor is Mg(2+).

Its subcellular location is the cytoplasm. It catalyses the reaction IMP + L-aspartate + GTP = N(6)-(1,2-dicarboxyethyl)-AMP + GDP + phosphate + 2 H(+). The protein operates within purine metabolism; AMP biosynthesis via de novo pathway; AMP from IMP: step 1/2. Functionally, plays an important role in the de novo pathway of purine nucleotide biosynthesis. Catalyzes the first committed step in the biosynthesis of AMP from IMP. The polypeptide is Adenylosuccinate synthetase (Streptococcus pneumoniae serotype 2 (strain D39 / NCTC 7466)).